The sequence spans 712 residues: Polyribonucleotide nucleotidyltransferase (712 aa).

Mg(2+)-binding residues include D487 and D493. In terms of domain architecture, KH spans 554 to 613 (PRIEVMNIPVDKIREVIGSGGKVIREIVEKTGAKINIEDDGTVKIASSSGKEIEAARKWI). The region spanning 623–691 (GQIYEGTVVK…ERGKVRLSMK (69 aa)) is the S1 motif domain.

The protein belongs to the polyribonucleotide nucleotidyltransferase family. Mg(2+) serves as cofactor.

The protein resides in the cytoplasm. The catalysed reaction is RNA(n+1) + phosphate = RNA(n) + a ribonucleoside 5'-diphosphate. Its function is as follows. Involved in mRNA degradation. Catalyzes the phosphorolysis of single-stranded polyribonucleotides processively in the 3'- to 5'-direction. This Rhizobium etli (strain ATCC 51251 / DSM 11541 / JCM 21823 / NBRC 15573 / CFN 42) protein is Polyribonucleotide nucleotidyltransferase.